Reading from the N-terminus, the 93-residue chain is UPF0298 protein lwe2074 (93 aa).

Belongs to the UPF0298 family.

The protein localises to the cytoplasm. The sequence is that of UPF0298 protein lwe2074 from Listeria welshimeri serovar 6b (strain ATCC 35897 / DSM 20650 / CCUG 15529 / CIP 8149 / NCTC 11857 / SLCC 5334 / V8).